The sequence spans 503 residues: Maturase K (503 aa).

Belongs to the intron maturase 2 family. MatK subfamily.

It is found in the plastid. Its subcellular location is the chloroplast. Its function is as follows. Usually encoded in the trnK tRNA gene intron. Probably assists in splicing its own and other chloroplast group II introns. In Stangeria eriopus (Natal grass cycad), this protein is Maturase K.